Here is a 188-residue protein sequence, read N- to C-terminus: Ribosome-recycling factor (188 aa).

It belongs to the RRF family.

It localises to the cytoplasm. In terms of biological role, responsible for the release of ribosomes from messenger RNA at the termination of protein biosynthesis. May increase the efficiency of translation by recycling ribosomes from one round of translation to another. The protein is Ribosome-recycling factor of Blochmanniella pennsylvanica (strain BPEN).